The primary structure comprises 508 residues: Photosystem II CP47 reaction center protein (508 aa).

The next 6 membrane-spanning stretches (helical) occupy residues 21–36 (SVHL…WAGS), 101–115 (IVLS…IWHW), 140–156 (GIHL…FGAF), 203–218 (IAAG…FHLS), 237–252 (VLSS…AFVV), and 457–472 (TFAL…HGAR).

The protein belongs to the PsbB/PsbC family. PsbB subfamily. PSII is composed of 1 copy each of membrane proteins PsbA, PsbB, PsbC, PsbD, PsbE, PsbF, PsbH, PsbI, PsbJ, PsbK, PsbL, PsbM, PsbT, PsbX, PsbY, PsbZ, Psb30/Ycf12, at least 3 peripheral proteins of the oxygen-evolving complex and a large number of cofactors. It forms dimeric complexes. The cofactor is Binds multiple chlorophylls. PSII binds additional chlorophylls, carotenoids and specific lipids..

It is found in the plastid. The protein localises to the chloroplast thylakoid membrane. One of the components of the core complex of photosystem II (PSII). It binds chlorophyll and helps catalyze the primary light-induced photochemical processes of PSII. PSII is a light-driven water:plastoquinone oxidoreductase, using light energy to abstract electrons from H(2)O, generating O(2) and a proton gradient subsequently used for ATP formation. This is Photosystem II CP47 reaction center protein from Angiopteris evecta (Mule's foot fern).